A 180-amino-acid chain; its full sequence is UPF0149 protein XAC3406 (180 aa).

This sequence belongs to the UPF0149 family.

The chain is UPF0149 protein XAC3406 from Xanthomonas axonopodis pv. citri (strain 306).